The chain runs to 1004 residues: 2-oxoglutarate dehydrogenase E1 component (1004 aa).

The protein belongs to the alpha-ketoglutarate dehydrogenase family. As to quaternary structure, homodimer. Part of the 2-oxoglutarate dehydrogenase (OGDH) complex composed of E1 (2-oxoglutarate dehydrogenase), E2 (dihydrolipoamide succinyltransferase) and E3 (dihydrolipoamide dehydrogenase); the complex contains multiple copies of the three enzymatic components (E1, E2 and E3). Requires thiamine diphosphate as cofactor.

The catalysed reaction is N(6)-[(R)-lipoyl]-L-lysyl-[protein] + 2-oxoglutarate + H(+) = N(6)-[(R)-S(8)-succinyldihydrolipoyl]-L-lysyl-[protein] + CO2. Its function is as follows. E1 component of the 2-oxoglutarate dehydrogenase (OGDH) complex which catalyzes the decarboxylation of 2-oxoglutarate, the first step in the conversion of 2-oxoglutarate to succinyl-CoA and CO(2). The polypeptide is 2-oxoglutarate dehydrogenase E1 component (Brucella suis biovar 1 (strain 1330)).